The following is a 330-amino-acid chain: Type I restriction enzyme MpnII specificity subunit (330 aa).

It belongs to the type-I restriction system S methylase family. As to quaternary structure, the methyltransferase is composed of M and S polypeptides.

In terms of biological role, the specificity (S) subunit of a type I restriction enzyme; this subunit dictates DNA sequence specificity. The M and S subunits together form a methyltransferase (MTase) that probably methylates A-2 on the top strand and A-3 on the bottom strand of the sequence 5'-GAN(7)TAY-3'. As the bacterial DNA is methylated on this sequence and this is the only type I methylase in the genome, it is probably responsible for all of the methylation on this site in the genome. The R subunit has multiple frameshifts and is probably not expressed in this bacteria. The polypeptide is Type I restriction enzyme MpnII specificity subunit (Mycoplasma pneumoniae (strain ATCC 29342 / M129 / Subtype 1) (Mycoplasmoides pneumoniae)).